The following is a 478-amino-acid chain: Putative response regulator NtrX-like (478 aa).

The Response regulatory domain maps to 5–121 (DVLIVDDEED…KLVILLKRAC (117 aa)). Asp54 carries the post-translational modification 4-aspartylphosphate. One can recognise a Sigma-54 factor interaction domain in the interval 143-372 (LVGNSTITLK…LRNVVEWTLI (230 aa)). ATP contacts are provided by residues 171–178 (GKVGSGKE) and 235–244 (ANNGTLYIDE).

In terms of biological role, member of the two-component regulatory system RBE_0312/RBE_0470. In Rickettsia bellii (strain RML369-C), this protein is Putative response regulator NtrX-like.